We begin with the raw amino-acid sequence, 127 residues long: Aspartate 1-decarboxylase (127 aa).

The Schiff-base intermediate with substrate; via pyruvic acid role is filled by Ser25. Ser25 carries the post-translational modification Pyruvic acid (Ser). Thr57 contributes to the substrate binding site. Tyr58 (proton donor) is an active-site residue. A substrate-binding site is contributed by 73–75; the sequence is GAA.

Belongs to the PanD family. As to quaternary structure, heterooctamer of four alpha and four beta subunits. Pyruvate is required as a cofactor. In terms of processing, is synthesized initially as an inactive proenzyme, which is activated by self-cleavage at a specific serine bond to produce a beta-subunit with a hydroxyl group at its C-terminus and an alpha-subunit with a pyruvoyl group at its N-terminus.

Its subcellular location is the cytoplasm. It carries out the reaction L-aspartate + H(+) = beta-alanine + CO2. Its pathway is cofactor biosynthesis; (R)-pantothenate biosynthesis; beta-alanine from L-aspartate: step 1/1. Its function is as follows. Catalyzes the pyruvoyl-dependent decarboxylation of aspartate to produce beta-alanine. The chain is Aspartate 1-decarboxylase from Clostridium acetobutylicum (strain ATCC 824 / DSM 792 / JCM 1419 / IAM 19013 / LMG 5710 / NBRC 13948 / NRRL B-527 / VKM B-1787 / 2291 / W).